The sequence spans 303 residues: Glycine--tRNA ligase alpha subunit (303 aa).

The protein belongs to the class-II aminoacyl-tRNA synthetase family. In terms of assembly, tetramer of two alpha and two beta subunits.

It localises to the cytoplasm. It catalyses the reaction tRNA(Gly) + glycine + ATP = glycyl-tRNA(Gly) + AMP + diphosphate. The chain is Glycine--tRNA ligase alpha subunit from Escherichia fergusonii (strain ATCC 35469 / DSM 13698 / CCUG 18766 / IAM 14443 / JCM 21226 / LMG 7866 / NBRC 102419 / NCTC 12128 / CDC 0568-73).